A 165-amino-acid polypeptide reads, in one-letter code: Protein C2-DOMAIN ABA-RELATED 8 (165 aa).

The residue at position 1 (Met1) is an N-acetylmethionine. The region spanning 1-106 (MENLVGLLRI…QGTDIQELTN (106 aa)) is the C2 domain. Residues Arg21, Asp22, Asp27, Asp73, Lys74, Asp75, and Asp81 each contribute to the Ca(2+) site.

Belongs to the plant CAR protein family. In terms of assembly, binds to PYR/PYL/RCAR abscisic acid intracellular receptors in an ABA-independent manner, both at the plasma membrane and in the nucleus.

Its subcellular location is the cell membrane. The protein localises to the nucleus. Stimulates the GTPase/ATPase activities of Obg-like ATPases. Mediates the transient calcium-dependent interaction of PYR/PYL/RCAR abscisic acid (ABA) receptors with the plasma membrane and thus regulates ABA sensitivity. This is Protein C2-DOMAIN ABA-RELATED 8 from Arabidopsis thaliana (Mouse-ear cress).